The chain runs to 336 residues: Succinylglutamate desuccinylase (336 aa).

Positions 59, 62, and 151 each coordinate Zn(2+). Glu215 is an active-site residue.

The protein belongs to the AspA/AstE family. Succinylglutamate desuccinylase subfamily. Requires Zn(2+) as cofactor.

The catalysed reaction is N-succinyl-L-glutamate + H2O = L-glutamate + succinate. The protein operates within amino-acid degradation; L-arginine degradation via AST pathway; L-glutamate and succinate from L-arginine: step 5/5. In terms of biological role, transforms N(2)-succinylglutamate into succinate and glutamate. This chain is Succinylglutamate desuccinylase, found in Pseudomonas fluorescens (strain Pf0-1).